The primary structure comprises 283 residues: Pantothenate synthetase (283 aa).

30 to 37 (MGNLHAGH) is an ATP binding site. The active-site Proton donor is the His-37. (R)-pantoate is bound at residue Gln-61. Residue Gln-61 coordinates beta-alanine. Position 149 to 152 (149 to 152 (GRKD)) interacts with ATP. Gln-155 serves as a coordination point for (R)-pantoate. 186 to 189 (LSSR) provides a ligand contact to ATP.

The protein belongs to the pantothenate synthetase family. Homodimer.

It localises to the cytoplasm. The catalysed reaction is (R)-pantoate + beta-alanine + ATP = (R)-pantothenate + AMP + diphosphate + H(+). It participates in cofactor biosynthesis; (R)-pantothenate biosynthesis; (R)-pantothenate from (R)-pantoate and beta-alanine: step 1/1. Its function is as follows. Catalyzes the condensation of pantoate with beta-alanine in an ATP-dependent reaction via a pantoyl-adenylate intermediate. This is Pantothenate synthetase from Chromohalobacter salexigens (strain ATCC BAA-138 / DSM 3043 / CIP 106854 / NCIMB 13768 / 1H11).